The primary structure comprises 411 residues: MTHWFHRNPLKATAPVSFNYYGVVTGPSASKICNDLRSSRARLLELFTDLSCNPEMMKNAADSYFSLLQGFINSLDESTQESKLRYIQNFKWTDTLQGQVPSAQQDAVFELISMGFNVALWYTKYASRLAGKENITEDEAKEVHRSLKIAAGIFKHLKESHLPKLITPAEKGRDLESRLIEAYVIQCQAEAQEVTIARAIELKHAPGLIAALAYETANFYQKADHTLSSLEPAYSAKWRKYLHLKMCFYTAYAYCYHGETLLASDKCGEAIRSLQEAEKLYAKAEALCKEYGETKGPGPTVKPSGHLFFRKLGNLVKNTLEKCQRENGFIYFQKIPTEAPQLELKANYGLVEPIPFEFPPTSVQWTPETLAAFDLTKRPKDDSTKPKPEEEVKPVKEPDIKPQKDTGCYIS.

Residues 90 to 408 (FKWTDTLQGQ…DIKPQKDTGC (319 aa)) enclose the BRO1 domain. Lys283 carries the post-translational modification N6-acetyllysine. The disordered stretch occupies residues 372–411 (AFDLTKRPKDDSTKPKPEEEVKPVKEPDIKPQKDTGCYIS). Positions 375–404 (LTKRPKDDSTKPKPEEEVKPVKEPDIKPQK) are enriched in basic and acidic residues. Cys408 carries the cysteine methyl ester modification. The S-farnesyl cysteine moiety is linked to residue Cys408. A propeptide spans 409–411 (YIS) (removed in mature form).

This sequence belongs to the BROX family. As to quaternary structure, monomer. Interacts with CHMP4B. Interacts with CHMP5: this interaction allows the recruitment of BROX to cellular membranes. Interacts with SYN2; this interaction promotes SYN2 ubiquitination and facilitates the relaxation of mechanical stress imposed by compressive actin fibers at the rupture site. In terms of processing, farnesylation is required for nuclear envelope localization.

The protein resides in the nucleus membrane. Its function is as follows. Nuclear envelope-associated factor that is involved in the nuclear envelope ruptures during interphase (NERDI) repair, where it is locally recruited by CHMP5 and reduces cytoskeletal stress through its action on SYN2 to help reseal the ruptured membrane. In Homo sapiens (Human), this protein is BRO1 domain-containing protein BROX.